We begin with the raw amino-acid sequence, 165 residues long: 6,7-dimethyl-8-ribityllumazine synthase (165 aa).

5-amino-6-(D-ribitylamino)uracil contacts are provided by residues Phe22, 56-58 (SME), and 80-82 (AVI). Residue 85–86 (ET) coordinates (2S)-2-hydroxy-3-oxobutyl phosphate. The active-site Proton donor is the His88. Phe113 is a 5-amino-6-(D-ribitylamino)uracil binding site. Arg127 is a (2S)-2-hydroxy-3-oxobutyl phosphate binding site.

It belongs to the DMRL synthase family.

The catalysed reaction is (2S)-2-hydroxy-3-oxobutyl phosphate + 5-amino-6-(D-ribitylamino)uracil = 6,7-dimethyl-8-(1-D-ribityl)lumazine + phosphate + 2 H2O + H(+). Its pathway is cofactor biosynthesis; riboflavin biosynthesis; riboflavin from 2-hydroxy-3-oxobutyl phosphate and 5-amino-6-(D-ribitylamino)uracil: step 1/2. Functionally, catalyzes the formation of 6,7-dimethyl-8-ribityllumazine by condensation of 5-amino-6-(D-ribitylamino)uracil with 3,4-dihydroxy-2-butanone 4-phosphate. This is the penultimate step in the biosynthesis of riboflavin. The polypeptide is 6,7-dimethyl-8-ribityllumazine synthase (Thermotoga petrophila (strain ATCC BAA-488 / DSM 13995 / JCM 10881 / RKU-1)).